The chain runs to 399 residues: uncharacterized protein (399 aa).

The tract at residues 254–335 (SRVSTGDTSP…FFRDSDDDGD (82 aa)) is disordered. A compositionally biased stretch (polar residues) spans 255–264 (RVSTGDTSPY). Positions 310 to 329 (RNAEMKKSHSANDSEEFFRD) are enriched in basic and acidic residues.

This is an uncharacterized protein from Xenopus laevis (African clawed frog).